Reading from the N-terminus, the 326-residue chain is Myeloid protein 1 (326 aa).

Residues 1 to 18 (MPALSLIALLSLVSTAFA) form the signal peptide. A run of 2 repeats spans residues 28–162 (QQGR…SDPT) and 177–312 (QQDA…SDPT). Cystine bridges form between cysteine 37–cysteine 74, cysteine 48–cysteine 53, and cysteine 113–cysteine 156. Zn(2+)-binding residues include histidine 67, aspartate 71, and histidine 152. Residues 307 to 326 (DRSDPTSNLERGKGESEMEV) form a disordered region.

It belongs to the LECT2/MIM-1 family. Post-translationally, substrate for arginine-specific ADP-ribosyltransferase.

The protein localises to the cytoplasmic granule. In Gallus gallus (Chicken), this protein is Myeloid protein 1 (MIM1).